The chain runs to 189 residues: Protein Rex (189 aa).

Residues 1–16 (MPKTRRRPRRSQRKRP) show a composition bias toward basic residues. The disordered stretch occupies residues 1–28 (MPKTRRRPRRSQRKRPPTPWPTSQGLDR). The Nuclear localization signal, and RNA-binding (RxRE) signature appears at 2–18 (PKTRRRPRRSQRKRPPT). Residues 56–70 (RPVYIVTPYWPPVQS) form a homomultimerization region. The residue at position 70 (serine 70) is a Phosphoserine; by host. Positions 82-93 (LSAQLYSSLSLD) match the Nuclear export signal motif. Over residues 84–94 (AQLYSSLSLDS) the composition is skewed to low complexity. The interval 84–189 (AQLYSSLSLD…PPSPGPSCPT (106 aa)) is disordered. Positions 111 to 125 (RRPPIQPPTFHPPSS) are enriched in pro residues. Residues 123-131 (PSSRPCANT) are homomultimerization. Residues 127–164 (PCANTPPSETDTWNPPLGSTSQPCLFQTPASGPKTCTP) show a composition bias toward polar residues. Threonine 174 carries the phosphothreonine; by host modification. Serine 177 carries the phosphoserine; by host modification. Residues 178–189 (FPPPSPGPSCPT) show a composition bias toward pro residues.

Belongs to the deltaretrovirus Rex protein family. As to quaternary structure, homomultimer. Multimeric assembly is essential for activity and involves XPO1. Binds to human XPO1 and KPNB1. Interacts (via N-terminal nuclear localization signal) with human NPM1. Post-translationally, phosphorylated.

The protein resides in the host nucleus. It is found in the host nucleolus. Its subcellular location is the host cytoplasm. Functionally, rex escorts unspliced gag-pro-pol and singly spliced env mRNAs out of the nucleus of infected cells. These mRNAs carry a recognition sequence called Rex responsive element (RxRE or XRE) located at the 3' region of the long terminal repeat (LTR). This function is essential since most HTLV proteins are translated from unspliced or partially spliced pre-mRNAs that cannot exit the nucleus by the pathway used by fully processed cellular mRNAs. Rex itself is translated from a fully spliced mRNA that probably readily exits the nucleus. Rex's nuclear localization signal (NLS) binds directly to KPNB1/importin beta-1 without previous binding to KPNA1/importin alpha-1. KPNB1 binds to the GDP bound form of RAN (Ran-GDP) and targets Rex to the nucleus. In the nucleus, the conversion from Ran-GDP to Ran-GTP dissociates Rex from KPNB1 and allows Rex's binding to the RRE in viral pre-mRNAs. Rex multimerizes on the RRE via cooperative assembly. This multimerization is critical for its full biological activity, since it may shield the viral RNA from being spliced or down-regulated, and probably exposes Rex's nuclear export signal (NES) to the surface. Rex can then form a complex with XPO1/CRM1, RANBP3 and Ran-GTP, leading to nuclear export of the complex. Conversion from Ran-GTP to Ran-GDP mediates dissociation of the Rex/RRE/XPO1/RANBP3/RAN complex, so that Rex can return to the nucleus for a subsequent round of export. This is Protein Rex from Homo sapiens (Human).